The following is a 299-amino-acid chain: Pyridoxal 5'-phosphate synthase subunit PdxS (299 aa).

Asp29 is a binding site for D-ribose 5-phosphate. The active-site Schiff-base intermediate with D-ribose 5-phosphate is Lys86. Gly158 is a D-ribose 5-phosphate binding site. Position 170 (Arg170) interacts with D-glyceraldehyde 3-phosphate. D-ribose 5-phosphate contacts are provided by residues Gly219 and 240-241 (GS).

The protein belongs to the PdxS/SNZ family. In the presence of PdxT, forms a dodecamer of heterodimers.

The enzyme catalyses aldehydo-D-ribose 5-phosphate + D-glyceraldehyde 3-phosphate + L-glutamine = pyridoxal 5'-phosphate + L-glutamate + phosphate + 3 H2O + H(+). It participates in cofactor biosynthesis; pyridoxal 5'-phosphate biosynthesis. Its function is as follows. Catalyzes the formation of pyridoxal 5'-phosphate from ribose 5-phosphate (RBP), glyceraldehyde 3-phosphate (G3P) and ammonia. The ammonia is provided by the PdxT subunit. Can also use ribulose 5-phosphate and dihydroxyacetone phosphate as substrates, resulting from enzyme-catalyzed isomerization of RBP and G3P, respectively. The sequence is that of Pyridoxal 5'-phosphate synthase subunit PdxS from Mycobacterium bovis (strain ATCC BAA-935 / AF2122/97).